Reading from the N-terminus, the 341-residue chain is S-adenosylmethionine:tRNA ribosyltransferase-isomerase (341 aa).

The protein belongs to the QueA family. Monomer.

The protein resides in the cytoplasm. The catalysed reaction is 7-aminomethyl-7-carbaguanosine(34) in tRNA + S-adenosyl-L-methionine = epoxyqueuosine(34) in tRNA + adenine + L-methionine + 2 H(+). The protein operates within tRNA modification; tRNA-queuosine biosynthesis. In terms of biological role, transfers and isomerizes the ribose moiety from AdoMet to the 7-aminomethyl group of 7-deazaguanine (preQ1-tRNA) to give epoxyqueuosine (oQ-tRNA). The sequence is that of S-adenosylmethionine:tRNA ribosyltransferase-isomerase from Clostridium botulinum (strain Langeland / NCTC 10281 / Type F).